We begin with the raw amino-acid sequence, 329 residues long: Phenylalanine--tRNA ligase alpha subunit (329 aa).

Glu-254 lines the Mg(2+) pocket.

It belongs to the class-II aminoacyl-tRNA synthetase family. Phe-tRNA synthetase alpha subunit type 1 subfamily. Tetramer of two alpha and two beta subunits. Mg(2+) is required as a cofactor.

Its subcellular location is the cytoplasm. It catalyses the reaction tRNA(Phe) + L-phenylalanine + ATP = L-phenylalanyl-tRNA(Phe) + AMP + diphosphate + H(+). This is Phenylalanine--tRNA ligase alpha subunit from Haemophilus influenzae (strain 86-028NP).